The chain runs to 90 residues: Secretoglobin family 1D member 2 (90 aa).

A signal peptide spans 1–21 (MKLSVCLLLVTLALCCYQANA).

It belongs to the secretoglobin family. Lipophilin subfamily. In terms of tissue distribution, highest expression was found in skeletal muscle. Expressed as well in thymus, trachea, kidney, steroid responsive tissues (prostate, testis, uterus, breast and ovary) and salivary gland.

The protein resides in the secreted. Its function is as follows. May bind androgens and other steroids, may also bind estramustine, a chemotherapeutic agent used for prostate cancer. May be under transcriptional regulation of steroid hormones. This Homo sapiens (Human) protein is Secretoglobin family 1D member 2 (SCGB1D2).